A 42-amino-acid chain; its full sequence is Lanthionine-containing peptide SapB precursor RamS (42 aa).

The propeptide occupies 1-21 (MNLFDLQSMETPKEEAMGDVE). A disordered region spans residues 1–21 (MNLFDLQSMETPKEEAMGDVE). 2 consecutive cross-links (lanthionine (Ser-Cys)) follow at residues 24 to 31 (SRASLLLC) and 34 to 41 (SSLSITTC). 2,3-didehydroalanine (Ser) occurs at positions 27 and 37.

The protein belongs to the lanthionine-containing morphogen family. Maturation involves the enzymatic conversion of Ser into dehydrated AA and the formation of thioether bonds with cysteine, probably by RamC. This is followed by membrane translocation and cleavage of the modified precursor. The RamS precursor protein (detected by an anti-propeptide antibody and by a C-terminal His-tag) is detected from at least 16 hours post-germination; its apparent molecular weight decreases starting from about 34 hours, when its probable modifying enzyme ramC is transcribed. Surfactin, a B.subtilis cyclic lipopeptide antibiotic which prevents aerial hyphae formation in S.coelicolor, decreases localization of RamS precursor protein to the cell membrane, suggesting that processing only occurs at the cell membrane.

The protein localises to the cell membrane. It localises to the secreted. It is found in the spore wall. In terms of biological role, stably accumulated precursor of SapB. Lanthionine-containing peptide devoid of antibiotic properties. A surface active peptide involved in the efficient formation of aerial mycelium when cells are grown in rich media. Has an overlapping function with the surface-active chaplin proteins; chaplins are essential on minimal medium while on rich medium both chaplins and SapB are required for efficient aerial hyphae formation. Required under conditions of high osmolarity where it may change the physical properties of the chaplin layer to allow hyphae to grow into air. Suggested to self-assemble at air-water interfaces, thus providing a film of surfactant through which nascent aerial hyphae can emerge; the aerial hyphae differentiate further into spores. Application to bald mutants (bld, unable to make aerial hyphae) restores hyphae growth. Application to chaplin negative mutants as well as ramC-ramS-ramA-ramB and ramR deletions also restores aerial hyphae growth and sporulation. Reduces surface tension of water from 72 to 30 mJ/m(2). The sequence is that of Lanthionine-containing peptide SapB precursor RamS (ramS) from Streptomyces coelicolor (strain ATCC BAA-471 / A3(2) / M145).